The following is a 192-amino-acid chain: Ion-translocating oxidoreductase complex subunit A (192 aa).

The next 6 membrane-spanning stretches (helical) occupy residues 5–25 (LLLL…FLGL), 38–58 (AIGM…LSFL), 72–92 (LRTM…EMLV), 102–122 (ALGI…VALL), 134–154 (AIYG…FSAM), and 171–191 (AIAM…AGLI).

It belongs to the NqrDE/RnfAE family. As to quaternary structure, the complex is composed of six subunits: RnfA, RnfB, RnfC, RnfD, RnfE and RnfG.

It is found in the cell inner membrane. In terms of biological role, part of a membrane-bound complex that couples electron transfer with translocation of ions across the membrane. In Shewanella denitrificans (strain OS217 / ATCC BAA-1090 / DSM 15013), this protein is Ion-translocating oxidoreductase complex subunit A.